Here is a 313-residue protein sequence, read N- to C-terminus: Transcription factor MafB (313 aa).

Disordered stretches follow at residues 51–77 (QPTG…FSPT) and 151–197 (MGLP…VEDR). The span at 55-76 (SVSSTPISTPCSSVPSSPSFSP) shows a compositional bias: low complexity. Residues 154–166 (PHHHPHHHQHQHH) are compositionally biased toward basic residues. The span at 167-192 (QTSPSPSGSSSSSQQLHHQQQHSSSS) shows a compositional bias: low complexity. Positions 225–250 (RLKQKRRTLKNRGYAQSCRYKRVQQK) are basic motif. The 64-residue stretch at 225-288 (RLKQKRRTLK…DAYKIKCEKL (64 aa)) folds into the bZIP domain. The segment at 253–274 (LEGEKTQLVQQVEQLKQEVSRL) is leucine-zipper. Residues 292–313 (NSSNFREAGSTSDNPSSPEFFM) form a disordered region.

This sequence belongs to the bZIP family. Maf subfamily. In terms of assembly, homodimer or heterodimer with other bHLH-Zip transcription factors. Binds DNA as a homodimer or a heterodimer.

Its subcellular location is the nucleus. In terms of biological role, acts as a transcriptional activator or repressor. Implicated in the regulation of cell-type specific gene expression and play a role in inductive events during lens development. This chain is Transcription factor MafB (mafb), found in Xenopus laevis (African clawed frog).